The following is a 225-amino-acid chain: Small ribosomal subunit protein eS1 (225 aa).

Positions 206–216 (PVEEPAAEEVA) are enriched in acidic residues. The disordered stretch occupies residues 206 to 225 (PVEEPAAEEVAEAPAAETQE).

Belongs to the eukaryotic ribosomal protein eS1 family.

This chain is Small ribosomal subunit protein eS1, found in Methanococcus maripaludis (strain C5 / ATCC BAA-1333).